A 447-amino-acid polypeptide reads, in one-letter code: 2-oxoadipate dioxygenase/decarboxylase (447 aa).

Residues H68, R72, and H224 each contribute to the 2-oxoadipate site. H68 is a Fe(2+) binding site. Positions 224 and 290 each coordinate Fe(2+). V391 contributes to the 2-oxoadipate binding site.

The protein belongs to the 2-oxoadipate dioxygenase/decarboxylase family. Fe(2+) serves as cofactor.

It catalyses the reaction 2-oxoadipate + O2 = (R)-2-hydroxyglutarate + CO2. In terms of biological role, catalyzes the decarboxylation and hydroxylation of 2-oxoadipate (2OA) to form D-2-hydroxyglutarate (D-2-HGA). The sequence is that of 2-oxoadipate dioxygenase/decarboxylase (ydcJ) from Escherichia coli (strain K12).